Reading from the N-terminus, the 221-residue chain is 7-cyano-7-deazaguanine synthase (221 aa).

10–20 (FSGGQDSTTCL) contacts ATP. Zn(2+)-binding residues include C187, C196, C199, and C202.

Belongs to the QueC family. In terms of assembly, homodimer. It depends on Zn(2+) as a cofactor.

It carries out the reaction 7-carboxy-7-deazaguanine + NH4(+) + ATP = 7-cyano-7-deazaguanine + ADP + phosphate + H2O + H(+). Its pathway is purine metabolism; 7-cyano-7-deazaguanine biosynthesis. Its function is as follows. Catalyzes the ATP-dependent conversion of 7-carboxy-7-deazaguanine (CDG) to 7-cyano-7-deazaguanine (preQ(0)). The protein is 7-cyano-7-deazaguanine synthase of Shouchella clausii (strain KSM-K16) (Alkalihalobacillus clausii).